A 323-amino-acid polypeptide reads, in one-letter code: Lipoyl synthase (323 aa).

[4Fe-4S] cluster-binding residues include Cys-61, Cys-66, Cys-72, Cys-87, Cys-91, Cys-94, and Ser-300. The Radical SAM core domain occupies 73-289 (WDKKHATFMI…ETVAYTKGFL (217 aa)).

Belongs to the radical SAM superfamily. Lipoyl synthase family. [4Fe-4S] cluster is required as a cofactor.

The protein localises to the cytoplasm. The catalysed reaction is [[Fe-S] cluster scaffold protein carrying a second [4Fe-4S](2+) cluster] + N(6)-octanoyl-L-lysyl-[protein] + 2 oxidized [2Fe-2S]-[ferredoxin] + 2 S-adenosyl-L-methionine + 4 H(+) = [[Fe-S] cluster scaffold protein] + N(6)-[(R)-dihydrolipoyl]-L-lysyl-[protein] + 4 Fe(3+) + 2 hydrogen sulfide + 2 5'-deoxyadenosine + 2 L-methionine + 2 reduced [2Fe-2S]-[ferredoxin]. It participates in protein modification; protein lipoylation via endogenous pathway; protein N(6)-(lipoyl)lysine from octanoyl-[acyl-carrier-protein]: step 2/2. Catalyzes the radical-mediated insertion of two sulfur atoms into the C-6 and C-8 positions of the octanoyl moiety bound to the lipoyl domains of lipoate-dependent enzymes, thereby converting the octanoylated domains into lipoylated derivatives. The protein is Lipoyl synthase of Sinorhizobium medicae (strain WSM419) (Ensifer medicae).